A 344-amino-acid chain; its full sequence is Arginine N-succinyltransferase (344 aa).

Leucine 125 contributes to the succinyl-CoA binding site. Histidine 229 serves as the catalytic Proton donor.

Belongs to the arginine N-succinyltransferase family.

The enzyme catalyses succinyl-CoA + L-arginine = N(2)-succinyl-L-arginine + CoA + H(+). Its pathway is amino-acid degradation; L-arginine degradation via AST pathway; L-glutamate and succinate from L-arginine: step 1/5. Its function is as follows. Catalyzes the transfer of succinyl-CoA to arginine to produce N(2)-succinylarginine. The sequence is that of Arginine N-succinyltransferase from Salmonella arizonae (strain ATCC BAA-731 / CDC346-86 / RSK2980).